Reading from the N-terminus, the 566-residue chain is Macrophage colony-stimulating factor 1 (566 aa).

A signal peptide spans 1 to 32 (MTARGAAGRCPSSTWMGSRLLLVCLLVSRSVA). The Extracellular portion of the chain corresponds to 33–508 (EVSEHCSHMI…SSIQDPQTSA (476 aa)). N-linked (GlcNAc...) asparagine glycans are attached at residues Asn106, Asn153, and Asn171. Disordered regions lie at residues 197–417 (PSSD…KLLP) and 434–484 (GKKS…GAAR). Polar residues predominate over residues 253–265 (PRSTCQTLESTEQ). A glycan (O-linked (Xyl...) (chondroitin sulfate) serine) is linked at Ser302. Residues 348–360 (DQQPTNITDTPLT) show a composition bias toward polar residues. Asn353 carries N-linked (GlcNAc...) asparagine glycosylation. 2 O-linked (GalNAc...) threonine glycosylation sites follow: Thr355 and Thr357. The span at 377 to 394 (EKTDGSSTLREDQQEPRS) shows a compositional bias: basic and acidic residues. The span at 400–410 (LNPQRVGNSAT) shows a compositional bias: polar residues. Over residues 434–445 (GKKSTRDRRSPA) the composition is skewed to basic and acidic residues. A helical membrane pass occupies residues 509-531 (FVFWVLGIILVLLAVGGLLFYSW). Over 532–566 (KRRSHRDPRTLDSSVGRPEGSSLAQDEDRQVELPV) the chain is Cytoplasmic. The tract at residues 538–566 (DPRTLDSSVGRPEGSSLAQDEDRQVELPV) is disordered. A compositionally biased stretch (basic and acidic residues) spans 557–566 (DEDRQVELPV).

In terms of assembly, homodimer or heterodimer; disulfide-linked. Likely to exist in multiple forms: homodimer consisting of 2 identical 150-200 kDa proteoglycan subunits, heterodimer consisting of a 150-200 kDa proteoglycan subunit and a truncated 43 kDa subunit, and a homodimer consisting of 2 identical 43 kDa subunits. Interacts with CSF1R. N-glycosylated. Post-translationally, O-glycosylated; contains chondroitin sulfate.

The protein localises to the cell membrane. Its subcellular location is the secreted. The protein resides in the extracellular space. Its function is as follows. Cytokine that plays an essential role in the regulation of survival, proliferation and differentiation of hematopoietic precursor cells, especially mononuclear phagocytes, such as macrophages and monocytes. Promotes the release of pro-inflammatory chemokines, and thereby plays an important role in innate immunity and in inflammatory processes. Plays an important role in the regulation of osteoclast proliferation and differentiation, the regulation of bone resorption, and is required for normal bone development. Required for normal male and female fertility. Promotes reorganization of the actin cytoskeleton, regulates formation of membrane ruffles, cell adhesion and cell migration. Plays a role in lipoprotein clearance. The protein is Macrophage colony-stimulating factor 1 (Csf1) of Rattus norvegicus (Rat).